A 32-amino-acid polypeptide reads, in one-letter code: uncharacterized protein (32 aa).

This is an uncharacterized protein from Ornithodoros (relapsing fever ticks).